Consider the following 476-residue polypeptide: Protein transport protein Sec61 subunit alpha (476 aa).

Residues 2–33 (GIKFLEVIKPFCAVLPEIQKPERKIQFREKVL) are Cytoplasmic-facing. A helical transmembrane segment spans residues 34–53 (WTAITLFIFLVCCQIPLFGI). At 54–76 (MSSDSADPFYWMRVILASNRGTL) the chain is on the lumenal side. Residues 77–96 (MELGISPIVTSDLIMQLLAG) traverse the membrane as a helical segment. Over 97-117 (AKIIEVGDSPKDRALFNGAQK) the chain is Cytoplasmic. Residues 118-138 (LFGMIITIGQAIVYVMTGMYG) traverse the membrane as a helical segment. Residues 139–144 (DPSEMG) are Lumenal-facing. Residues 145 to 165 (AGICLVIIIQLFVAGLIVLLL) traverse the membrane as a helical segment. The Cytoplasmic portion of the chain corresponds to 166–172 (DELLQKG). Residues 173–193 (YGLGSGISLLIATNICETIVW) form a helical membrane-spanning segment. At 194–240 (KAFSPTTVNTGRGTEFEGAIIALFHLLATRTDKVRALREAFYRQNLP) the chain is on the lumenal side. Residues 241-261 (NLMNLIATVFVFAVVIYFQGF) traverse the membrane as a helical segment. Residues 262 to 288 (RVDLPIKSARYRGQYNTYPIKLFYTSN) are Cytoplasmic-facing. Residues 289 to 309 (IPIILQSALVSNLYVISQMLS) form a helical membrane-spanning segment. Over 310–354 (TRFSGNFIVNLLGTWSDTSTGGPARAYPVGGLCYFLSPPESFGSV) the chain is Lumenal. The helical transmembrane segment at 355–375 (LDDPVHAAIYIVFMLGSCAFF) threads the bilayer. Over 376-420 (SKTWIEVSGSSAKDVAKQLKEQQMVMRGHRETSMVHELNRYIPTA) the chain is Cytoplasmic. Residues 421–441 (AAFGGLCIGGLSVMADFLGAI) traverse the membrane as a helical segment. Over 442–445 (GSGT) the chain is Lumenal. The chain crosses the membrane as a helical span at residues 446–462 (GILLAVTIIYQYFEIFV). Residues 463–476 (KEQSEMGSMGGLFF) lie on the Cytoplasmic side of the membrane.

The protein belongs to the SecY/SEC61-alpha family. The SEC61 channel-forming translocon complex consists of channel-forming core components SEC61A1, SEC61B and SEC61G and different auxiliary components such as SEC62 and SEC63. The SEC61 channel associates with the multi-pass translocon (MPT) complex.

The protein localises to the endoplasmic reticulum membrane. In terms of biological role, component of SEC61 channel-forming translocon complex that mediates transport of signal peptide-containing precursor polypeptides across the endoplasmic reticulum (ER). Forms a ribosome receptor and a gated pore in the ER membrane, both functions required for cotranslational translocation of nascent polypeptides. May cooperate with auxiliary protein SEC62, SEC63 and HSPA5/BiP to enable post-translational transport of small presecretory proteins. The SEC61 channel is also involved in ER membrane insertion of transmembrane proteins: it mediates membrane insertion of the first few transmembrane segments of proteins, while insertion of subsequent transmembrane regions of multi-pass membrane proteins is mediated by the multi-pass translocon (MPT) complex. This chain is Protein transport protein Sec61 subunit alpha (sec61a), found in Boreogadus saida (Polar cod).